Consider the following 424-residue polypeptide: ATP-sensitive inward rectifier potassium channel 8 (424 aa).

Topologically, residues 1–69 are cytoplasmic; that stretch reads MLARKSIIPE…IFTTLVDLKW (69 aa). Residue serine 6 is modified to Phosphoserine. Residues 70-94 form a helical membrane-spanning segment; it reads RHTLVIFTMSFLCSWLLFAIMWWLV. Residues 95–126 lie on the Extracellular side of the membrane; the sequence is AFAHGDIYAYMEKGTMEKSGLESAVCVTNVRS. Residues 127-138 constitute an intramembrane region (helical; Pore-forming); it reads FTSAFLFSIEVQ. Positions 139–145 form an intramembrane region, pore-forming; it reads VTIGFGG. The short motif at 140 to 145 is the Selectivity filter element; that stretch reads TIGFGG. At 146 to 154 the chain is on the extracellular side; that stretch reads RMMTEECPL. A helical membrane pass occupies residues 155–176; that stretch reads AITVLILQNIVGLIINAVMLGC. At 177–424 the chain is on the cytoplasmic side; that stretch reads IFMKTAQAHR…PEGNQCPSES (248 aa). A disordered region spans residues 373-409; it reads ELSHQNSLRKRNSMRRNNSMRRNNSIRRNNSSLMVPK. The segment covering 387–404 has biased composition (low complexity); the sequence is RRNNSMRRNNSIRRNNSS.

It belongs to the inward rectifier-type potassium channel (TC 1.A.2.1) family. KCNJ8 subfamily. Interacts with ABCC9.

Its subcellular location is the membrane. The catalysed reaction is K(+)(in) = K(+)(out). In terms of biological role, inward rectifier potassium channels are characterized by a greater tendency to allow potassium to flow into the cell rather than out of it. Their voltage dependence is regulated by the concentration of extracellular potassium; as external potassium is raised, the voltage range of the channel opening shifts to more positive voltages. The inward rectification is mainly due to the blockage of outward current by internal magnesium. This channel is activated by internal ATP and can be blocked by external barium. Can form a sulfonylurea-sensitive but ATP-insensitive potassium channel with ABCC9. The protein is ATP-sensitive inward rectifier potassium channel 8 (Kcnj8) of Mus musculus (Mouse).